Here is a 373-residue protein sequence, read N- to C-terminus: Putative F-box/kelch-repeat protein At3g19410 (373 aa).

Residues 1–46 enclose the F-box domain; that stretch reads MTIPELPKDLIEEILCYVPATYLKRLRSTCKGWNRLFKDDRRFAKK. Kelch repeat units follow at residues 101–148, 149–200, and 329–373; these read RIFH…FVLG, YYQE…QCVS, and KLYI…EEKS.

This is Putative F-box/kelch-repeat protein At3g19410 from Arabidopsis thaliana (Mouse-ear cress).